Reading from the N-terminus, the 252-residue chain is Nuclease C1 (252 aa).

His87 functions as the Proton acceptor in the catalytic mechanism. Residue Asn119 coordinates Mg(2+).

The protein belongs to the DNA/RNA non-specific endonuclease family. Mg(2+) serves as cofactor. Mn(2+) is required as a cofactor.

It localises to the secreted. This enzyme has both RNase and DNase activity. The chain is Nuclease C1 (NUC1CE) from Cunninghamella echinulata var. echinulata.